The following is a 142-amino-acid chain: Large ribosomal subunit protein uL11 (142 aa).

The protein belongs to the universal ribosomal protein uL11 family. In terms of assembly, part of the ribosomal stalk of the 50S ribosomal subunit. Interacts with L10 and the large rRNA to form the base of the stalk. L10 forms an elongated spine to which L12 dimers bind in a sequential fashion forming a multimeric L10(L12)X complex. Post-translationally, one or more lysine residues are methylated.

Functionally, forms part of the ribosomal stalk which helps the ribosome interact with GTP-bound translation factors. The polypeptide is Large ribosomal subunit protein uL11 (Solibacter usitatus (strain Ellin6076)).